We begin with the raw amino-acid sequence, 206 residues long: Cell division protein SepF (206 aa).

The segment covering 31 to 53 (EEKERRKTERQEQRQAVKQEKRT) has biased composition (basic and acidic residues). The segment at 31–81 (EEKERRKTERQEQRQAVKQEKRTFPSQRPAFSEEAPTSSSSKLSAASGSSD) is disordered. The span at 60–80 (AFSEEAPTSSSSKLSAASGSS) shows a compositional bias: low complexity.

This sequence belongs to the SepF family. Homodimer. Interacts with FtsZ.

The protein localises to the cytoplasm. Functionally, cell division protein that is part of the divisome complex and is recruited early to the Z-ring. Probably stimulates Z-ring formation, perhaps through the cross-linking of FtsZ protofilaments. Its function overlaps with FtsA. The protein is Cell division protein SepF of Lachnoclostridium phytofermentans (strain ATCC 700394 / DSM 18823 / ISDg) (Clostridium phytofermentans).